A 571-amino-acid chain; its full sequence is Glutamate--tRNA ligase (571 aa).

Residues 110 to 120 (PNPNGPGTLGS) carry the 'HIGH' region motif.

Belongs to the class-I aminoacyl-tRNA synthetase family. Glutamate--tRNA ligase type 2 subfamily.

The protein localises to the cytoplasm. The catalysed reaction is tRNA(Glu) + L-glutamate + ATP = L-glutamyl-tRNA(Glu) + AMP + diphosphate. Catalyzes the attachment of glutamate to tRNA(Glu) in a two-step reaction: glutamate is first activated by ATP to form Glu-AMP and then transferred to the acceptor end of tRNA(Glu). The chain is Glutamate--tRNA ligase from Methanosarcina acetivorans (strain ATCC 35395 / DSM 2834 / JCM 12185 / C2A).